Consider the following 1341-residue polypeptide: DNA-directed RNA polymerase subunit Rpo1N (1341 aa).

8 residues coordinate Zn(2+): Cys-62, Cys-65, Cys-72, His-75, Cys-102, Cys-105, Cys-149, and Cys-152. Mg(2+) contacts are provided by Asp-918, Asp-920, and Asp-922.

Belongs to the RNA polymerase beta' chain family. Part of the RNA polymerase complex. Mg(2+) serves as cofactor. Requires Zn(2+) as cofactor. This protein undergoes a protein self splicing that involves a post-translational excision of the intervening region (intein) followed by peptide ligation.

The protein resides in the cytoplasm. It carries out the reaction RNA(n) + a ribonucleoside 5'-triphosphate = RNA(n+1) + diphosphate. DNA-dependent RNA polymerase (RNAP) catalyzes the transcription of DNA into RNA using the four ribonucleoside triphosphates as substrates. Forms the clamp head domain. This Methanocaldococcus jannaschii (strain ATCC 43067 / DSM 2661 / JAL-1 / JCM 10045 / NBRC 100440) (Methanococcus jannaschii) protein is DNA-directed RNA polymerase subunit Rpo1N.